We begin with the raw amino-acid sequence, 346 residues long: Centromere protein L (346 aa).

Phosphoserine is present on Ser41. Thr45 carries the phosphothreonine modification. The residue at position 55 (Ser55) is a Phosphoserine.

It belongs to the CENP-L/IML3 family. As to quaternary structure, component of the CENPA-CAD complex, composed of CENPI, CENPK, CENPL, CENPO, CENPP, CENPQ, CENPR and CENPS. The CENPA-CAD complex interacts with the CENPA-NAC complex, at least composed of CENPA, CENPC, CENPH, CENPM, CENPN, CENPT and CENPU.

It localises to the nucleus. It is found in the chromosome. The protein resides in the centromere. In terms of biological role, component of the CENPA-CAD (nucleosome distal) complex, a complex recruited to centromeres which is involved in assembly of kinetochore proteins, mitotic progression and chromosome segregation. May be involved in incorporation of newly synthesized CENPA into centromeres via its interaction with the CENPA-NAC complex. The sequence is that of Centromere protein L (CENPL) from Bos taurus (Bovine).